A 310-amino-acid polypeptide reads, in one-letter code: Porphobilinogen deaminase (310 aa).

Cys-242 carries the post-translational modification S-(dipyrrolylmethanemethyl)cysteine.

Belongs to the HMBS family. As to quaternary structure, monomer. Requires dipyrromethane as cofactor.

It catalyses the reaction 4 porphobilinogen + H2O = hydroxymethylbilane + 4 NH4(+). Its pathway is porphyrin-containing compound metabolism; protoporphyrin-IX biosynthesis; coproporphyrinogen-III from 5-aminolevulinate: step 2/4. In terms of biological role, tetrapolymerization of the monopyrrole PBG into the hydroxymethylbilane pre-uroporphyrinogen in several discrete steps. This is Porphobilinogen deaminase from Shewanella sp. (strain W3-18-1).